The chain runs to 505 residues: MPTNAGTSLSSYKHIVAIGTTVKSESLESAAYEIPRKRKMRSDSAAVSGNSVSTPKKLKSHLPSSVPNPGMSEKEVVEDSNEILRYPVNLAVSDCLGTKSKWSPRDEEQMRAVKEALHVSKAPSTILCREDEQIRIFEFVKGCIDQQKAGSLYICGCPGTGKSLSMEKVVQQVGDWSTQAGLPPVDTLSVNCTSLSKTTDIFSKILGEIKPGKNANTNSSPLQHLQNLFSQKQESSSSRMMLIIADEMDYLITKDRGVLYDLFMLTTLPFSRCILIGVANAIDLADRFLPKLKSLNCKPMVITFRAYSKDQILRILQERLRVLSYVAFQPKALELCARKVAAASGDMRKALCVCRSALEILEIETRGSTGPESQGPTPDDSVVRMDHMAAALSKTFKSPVVETIQSLPQHQQIIICAAAKAFRGSKKDATVGELNKLYLEICKSWMISPAGITEFTNMCTVLNDQGILKVGQARRDKLKRVSLRVDESDITFALQEIRFFRNCLL.

The disordered stretch occupies residues 37-72 (KRKMRSDSAAVSGNSVSTPKKLKSHLPSSVPNPGMS). The span at 45–54 (AAVSGNSVST) shows a compositional bias: polar residues.

The protein belongs to the CDC6/cdc18 family.

It localises to the nucleus. In terms of biological role, may be involved in the initiation of DNA replication. The chain is Cell division control protein 6 homolog B from Arabidopsis thaliana (Mouse-ear cress).